A 113-amino-acid polypeptide reads, in one-letter code: MSAIQNLQPFDPFADASKGDDLLPAGTEDYIHIRIQQRNGRKTLTTVQGIADDYDKKKLVKAFKKKFACNGTVIEHPEYGEVIQLQGDQRKNICQFLVEIGLAKDDQLKVHGF.

A disordered region spans residues 1–21; sequence MSAIQNLQPFDPFADASKGDD. At serine 2 the chain carries N-acetylserine. Serine 2 bears the Phosphoserine mark.

It belongs to the SUI1 family. In terms of assembly, component of the 43S pre-initiation complex (43S PIC), which is composed of the 40S ribosomal subunit, EIF1, eIF1A (EIF1AX), eIF3 complex, EIF5 and eIF2-GTP-initiator tRNA complex (eIF2 ternary complex). Interacts with EIF4G1; in specific 5'-UTR length and AUG context. Interacts with EIF5; which in a mutual exclusive interaction associates either with EIF1 or with EIF2S2 on a common binding site. Interacts with RENT2.

It localises to the cytoplasm. In terms of biological role, component of the 43S pre-initiation complex (43S PIC), which binds to the mRNA cap-proximal region, scans mRNA 5'-untranslated region, and locates the initiation codon. Together with eIF1A (EIF1AX), EIF1 facilitates scanning and is essential for start codon recognition on the basis of AUG nucleotide context and location relative to the 5'-cap. Participates to initiation codon selection by influencing the conformation of the 40S ribosomal subunit and the positions of bound mRNA and initiator tRNA; this is possible after its binding to the interface surface of the platform of the 40S ribosomal subunit close to the P-site. Together with eIF1A (EIF1AX), also regulates the opening and closing of the mRNA binding channel, which ensures mRNA recruitment, scanning and the fidelity of initiation codon selection. Continuously monitors and protects against premature and partial base-pairing of codons in the 5'-UTR with the anticodon of initiator tRNA. Together with eIF1A (EIF1AX), acts for ribosomal scanning, promotion of the assembly of 48S complex at the initiation codon (43S PIC becomes 48S PIC after the start codon is reached), and dissociation of aberrant complexes. Interacts with EIF4G1, which in a mutual exclusive interaction associates either with EIF1 or with EIF4E on a common binding site. EIF4G1-EIF1 complex promotes ribosome scanning (on both short and long 5'UTR), leaky scanning (on short 5'UTR) which is the bypass of the initial start codon, and discrimination against cap-proximal AUG. Is probably maintained within the 43S PIC in open conformation thanks to eIF1A-EIF5 interaction. Once the correct start codon is reached, EIF1 is physically excluded from the decoding site, shifting the PIC into the closed conformation and arresting it at the start codon. The polypeptide is Eukaryotic translation initiation factor 1 (EIF1) (Gallus gallus (Chicken)).